Consider the following 176-residue polypeptide: R-phycoerythrin beta chain (176 aa).

Phycourobilin contacts are provided by cysteine 50 and cysteine 61. N4-methylasparagine is present on asparagine 72. Residues cysteine 82 and cysteine 158 each contribute to the (2R,3E)-phycoerythrobilin site.

This sequence belongs to the phycobiliprotein family. In terms of assembly, heterodimer of an alpha and a beta chain. In terms of processing, contains two covalently linked phycoerythrobilin chromophores and one covalently linked phycourobilin chromophore.

It is found in the plastid. Its subcellular location is the chloroplast thylakoid membrane. In terms of biological role, light-harvesting photosynthetic bile pigment-protein from the phycobiliprotein complex. In Aglaothamnion neglectum (Red alga), this protein is R-phycoerythrin beta chain (cpeB).